The following is a 413-amino-acid chain: Gamma-DL-glutamyl hydrolase (413 aa).

A signal peptide spans 1–32 (MNTLANWKKFLLVAVIICFLVPIMTKAEIAEA). NlpC/P60 domains are found at residues 33–159 (DTSS…RRIA), 163–287 (ATAD…RRFD), and 291–413 (IPKE…IRVQ). Cys-194 (nucleophile) is an active-site residue. His-247 acts as the Proton acceptor in catalysis. Gln-259 is an active-site residue.

Belongs to the peptidase C40 family.

The protein localises to the secreted. It is found in the cell wall. Inhibited by pretreatment with 1 mM 4-(hydroxymercuri)benzoate, a sulfhydryl inhibitor. Its function is as follows. Cleaves, in an endo-type manner, the gamma-glutamyl bond between D-glutamate and L-glutamate of poly-gamma-glutamate (PGA). The polypeptide is Gamma-DL-glutamyl hydrolase (pgdS) (Bacillus subtilis (strain 168)).